The chain runs to 89 residues: Defensin-like protein 103 (89 aa).

The N-terminal stretch at 1-24 (MAITRKNLVAFCFTILFIISSIHC) is a signal peptide. 4 disulfides stabilise this stretch: Cys46–Cys84, Cys52–Cys75, Cys61–Cys82, and Cys65–Cys83.

It belongs to the DEFL family.

The protein localises to the secreted. The protein is Defensin-like protein 103 of Arabidopsis thaliana (Mouse-ear cress).